A 1038-amino-acid chain; its full sequence is Isoleucine--tRNA ligase (1038 aa).

The short motif at 47–57 (PFATGLPHYGH) is the 'HIGH' region element. Positions 591–595 (KMSKR) match the 'KMSKS' region motif. Position 594 (Lys-594) interacts with ATP.

This sequence belongs to the class-I aminoacyl-tRNA synthetase family. IleS type 2 subfamily. Monomer. Zn(2+) serves as cofactor.

It localises to the cytoplasm. The catalysed reaction is tRNA(Ile) + L-isoleucine + ATP = L-isoleucyl-tRNA(Ile) + AMP + diphosphate. Functionally, catalyzes the attachment of isoleucine to tRNA(Ile). As IleRS can inadvertently accommodate and process structurally similar amino acids such as valine, to avoid such errors it has two additional distinct tRNA(Ile)-dependent editing activities. One activity is designated as 'pretransfer' editing and involves the hydrolysis of activated Val-AMP. The other activity is designated 'posttransfer' editing and involves deacylation of mischarged Val-tRNA(Ile). This chain is Isoleucine--tRNA ligase, found in Protochlamydia amoebophila (strain UWE25).